The chain runs to 430 residues: MAKISRIIGREILDSRGNPTVEADVYLESGAMGRAAAPSGASTGSREALELRDGDKSRYLGKGVTKAVAAINDTISPALLGKDALAQADIDGIMIDLDGTENKETLGANAILAVSLAVAKAAAAEKGVALYEHIADLNGTSGQYSMPVPMMNIINGGEHADNNVDIQEFMVQPVGAKSFKEALRMGAEIFHALKKVLSAKGLNTAVGDEGGFAPNLSSNAEALAVIVEAVENAGYKMNEDITLALDCAASEFYKEGKYVLSGEDKSFDSEAFGDYLADLSAQYPIVSIEDGLDESDWDGWASLTKKIGDKVQLVGDDLFVTNTKILKRGIDNGIGNSILIKFNQIGSLTETLNAIKMAKDAGFTAVISHRSGETEDATIADLAVGTAAGQIKTGSLCRSDRVAKYNQLLRIEEALGDAATYKGRSEIKGQ.

Gln167 is a (2R)-2-phosphoglycerate binding site. Glu209 functions as the Proton donor in the catalytic mechanism. Mg(2+) contacts are provided by Asp246, Glu289, and Asp316. The (2R)-2-phosphoglycerate site is built by Lys341, Arg370, Ser371, and Lys392. Residue Lys341 is the Proton acceptor of the active site.

Belongs to the enolase family. In terms of assembly, component of the RNA degradosome, a multiprotein complex involved in RNA processing and mRNA degradation. The cofactor is Mg(2+).

It is found in the cytoplasm. Its subcellular location is the secreted. The protein localises to the cell surface. It carries out the reaction (2R)-2-phosphoglycerate = phosphoenolpyruvate + H2O. It participates in carbohydrate degradation; glycolysis; pyruvate from D-glyceraldehyde 3-phosphate: step 4/5. Catalyzes the reversible conversion of 2-phosphoglycerate (2-PG) into phosphoenolpyruvate (PEP). It is essential for the degradation of carbohydrates via glycolysis. The polypeptide is Enolase (Alteromonas mediterranea (strain DSM 17117 / CIP 110805 / LMG 28347 / Deep ecotype)).